The sequence spans 383 residues: 4-hydroxy-3-methylbut-2-en-1-yl diphosphate synthase (flavodoxin) (383 aa).

Residues cysteine 277, cysteine 280, cysteine 312, and glutamate 319 each contribute to the [4Fe-4S] cluster site.

The protein belongs to the IspG family. [4Fe-4S] cluster is required as a cofactor.

It catalyses the reaction (2E)-4-hydroxy-3-methylbut-2-enyl diphosphate + oxidized [flavodoxin] + H2O + 2 H(+) = 2-C-methyl-D-erythritol 2,4-cyclic diphosphate + reduced [flavodoxin]. It functions in the pathway isoprenoid biosynthesis; isopentenyl diphosphate biosynthesis via DXP pathway; isopentenyl diphosphate from 1-deoxy-D-xylulose 5-phosphate: step 5/6. Converts 2C-methyl-D-erythritol 2,4-cyclodiphosphate (ME-2,4cPP) into 1-hydroxy-2-methyl-2-(E)-butenyl 4-diphosphate. This is 4-hydroxy-3-methylbut-2-en-1-yl diphosphate synthase (flavodoxin) from Caulobacter vibrioides (strain ATCC 19089 / CIP 103742 / CB 15) (Caulobacter crescentus).